The sequence spans 1309 residues: Angiotensin-converting enzyme (1309 aa).

A signal peptide spans 1–33 (MGAASGCRWPWPPLLPLLLMLLLPPPPLPVALA). At 34 to 1259 (LDSALQPGNF…GLNLEEQQAR (1226 aa)) the chain is on the extracellular side. N-linked (GlcNAc...) asparagine glycosylation is found at Asn42, Asn58, Asn78, Asn115, Asn135, Asn150, and Asn164. 2 consecutive Peptidase M2 domains span residues 44–627 (TADE…LGWP) and 646–1225 (VSDE…LGWP). The cysteines at positions 161 and 169 are disulfide-linked. Tyr235 contacts chloride. Asn322 carries N-linked (GlcNAc...) asparagine glycosylation. Cys363 and Cys381 are oxidised to a cystine. His394 contributes to the Zn(2+) binding site. Catalysis depends on Glu395, which acts as the Proton acceptor 1. The Zn(2+) site is built by His398 and Glu422. Asn512 is a glycosylation site (N-linked (GlcNAc...) asparagine). The active-site Proton donor 1 is the His523. The N-linked (GlcNAc...) asparagine glycan is linked to Asn526. A chloride-binding site is contributed by Arg532. An intrachain disulfide couples Cys548 to Cys560. Residues Asn680, Asn698, Asn717, and Asn763 are each glycosylated (N-linked (GlcNAc...) asparagine). The cysteines at positions 760 and 766 are disulfide-linked. Residues Arg794 and Tyr832 each coordinate chloride. The N-linked (GlcNAc...) asparagine glycan is linked to Asn945. Residues Cys960 and Cys978 are joined by a disulfide bond. Zn(2+) is bound at residue His991. Glu992 acts as the Proton acceptor 2 in catalysis. The Zn(2+) site is built by His995 and Glu1019. Chloride is bound by residues Trp1093 and Arg1097. The Proton donor 2 role is filled by His1121. A chloride-binding site is contributed by Arg1130. A disulfide bond links Cys1146 and Cys1158. N-linked (GlcNAc...) asparagine glycosylation is found at Asn1194 and Asn1228. The tract at residues 1218 to 1259 (HGEKLGWPQYNWTPNSARLEGSFAGTGRVNFLGLNLEEQQAR) is juxtamembrane stalk. The chain crosses the membrane as a helical span at residues 1260 to 1280 (VGQWVLLFLGVTLLVATMGLT). At 1281-1309 (QRLFSIRHQILRRTHRGPQFGSEVELRHS) the chain is on the cytoplasmic side. Ser1302 bears the Phosphoserine mark.

It belongs to the peptidase M2 family. As to quaternary structure, monomer and homodimer; homodimerizes following binding to an inhibitor. Interacts with calmodulin (CALM1, CALM2 or CALM3); interaction takes place in the cytoplasmic region and regulates phosphorylation and proteolytic cleavage. Requires Zn(2+) as cofactor. Chloride is required as a cofactor. In terms of processing, produced following proteolytic cleavage by secretase enzymes that cleave the transmembrane form in the juxtamembrane stalk region upstream of the transmembrane region. Cleavage can take place at different sites of the juxtamembrane stalk region. Post-translationally, phosphorylated by CK2 on Ser-1302; which allows membrane retention. Phosphorylated on tyrosine residues on its extracellular part, promoting cleavage by secretase enzymes and formation of the soluble form (Angiotensin-converting enzyme, soluble form).

It is found in the cell membrane. The protein resides in the cytoplasm. Its subcellular location is the secreted. The catalysed reaction is Release of a C-terminal dipeptide, oligopeptide-|-Xaa-Yaa, when Xaa is not Pro, and Yaa is neither Asp nor Glu. Thus, conversion of angiotensin I to angiotensin II, with increase in vasoconstrictor activity, but no action on angiotensin II.. It catalyses the reaction angiotensin I + H2O = L-histidyl-L-leucine + angiotensin II. It carries out the reaction bradykinin + H2O = L-Phe-L-Arg + bradykinin(1-7). The enzyme catalyses substance P + H2O = substance P(1-9) + L-Leu-L-Met-NH2. The catalysed reaction is substance P + H2O = substance P(1-8) + Gly-L-Leu-L-Met-NH2. It catalyses the reaction substance P + H2O = L-Phe-L-Phe-Gly-L-Leu-L-Met-NH2 + substance P(1-6). It carries out the reaction neurotensin + H2O = neurotensin(1-11) + L-isoleucyl-L-leucine. The enzyme catalyses goralatide + H2O = N-acetyl-L-seryl-L-aspartate + L-lysyl-L-proline. The catalysed reaction is Met-enkephalin + H2O = L-phenylalanyl-L-methionine + L-tyrosylglycylglycine. It catalyses the reaction Leu-enkephalin + H2O = L-tyrosylglycylglycine + L-phenylalanyl-L-leucine. It carries out the reaction Met-enkephalin-Arg-Phe + H2O = L-arginyl-L-phenylalanine + Met-enkephalin. With respect to regulation, the dipeptidyl carboxypeptidase activity is strongly activated by chloride. The dipeptidyl carboxypeptidase activity is specifically inhibited by lisinopril, captopril and enalaprilat. Dipeptidyl carboxypeptidase that removes dipeptides from the C-terminus of a variety of circulating hormones, such as angiotensin I, bradykinin or enkephalins, thereby playing a key role in the regulation of blood pressure, electrolyte homeostasis or synaptic plasticity. Composed of two similar catalytic domains, each possessing a functional active site, with different selectivity for substrates. Plays a major role in the angiotensin-renin system that regulates blood pressure and sodium retention by the kidney by converting angiotensin I to angiotensin II, resulting in an increase of the vasoconstrictor activity of angiotensin. Also able to inactivate bradykinin, a potent vasodilator, and therefore enhance the blood pressure response. Acts as a regulator of synaptic transmission by mediating cleavage of neuropeptide hormones, such as substance P, neurotensin or enkephalins. Catalyzes degradation of different enkephalin neuropeptides (Met-enkephalin, Leu-enkephalin, Met-enkephalin-Arg-Phe and possibly Met-enkephalin-Arg-Gly-Leu). Acts as a regulator of synaptic plasticity in the nucleus accumbens of the brain by mediating cleavage of Met-enkephalin-Arg-Phe, a strong ligand of Mu-type opioid receptor OPRM1, into Met-enkephalin. Met-enkephalin-Arg-Phe cleavage by ACE decreases activation of OPRM1, leading to long-term synaptic potentiation of glutamate release. Also acts as a regulator of hematopoietic stem cell differentiation by mediating degradation of hemoregulatory peptide N-acetyl-SDKP (AcSDKP). Acts as a regulator of cannabinoid signaling pathway by mediating degradation of hemopressin, an antagonist peptide of the cannabinoid receptor CNR1. Involved in amyloid-beta metabolism by catalyzing degradation of Amyloid-beta protein 40 and Amyloid-beta protein 42 peptides, thereby preventing plaque formation. Catalyzes cleavage of cholecystokinin (maturation of Cholecystokinin-8 and Cholecystokinin-5) and Gonadoliberin-1 (both maturation and degradation) hormones. Degradation of hemoregulatory peptide N-acetyl-SDKP (AcSDKP) and amyloid-beta proteins is mediated by the N-terminal catalytic domain, while angiotensin I and cholecystokinin cleavage is mediated by the C-terminal catalytic region. Its function is as follows. Soluble form that is released in blood plasma and other body fluids following proteolytic cleavage in the juxtamembrane stalk region. The sequence is that of Angiotensin-converting enzyme from Sus scrofa (Pig).